Here is a 371-residue protein sequence, read N- to C-terminus: uncharacterized protein (371 aa).

Residues 110–140 (MEKFIDFDRCNKCGECARKICKAKWTPLNYL) enclose the 4Fe-4S ferredoxin-type domain.

This is an uncharacterized protein from Methanocaldococcus jannaschii (strain ATCC 43067 / DSM 2661 / JAL-1 / JCM 10045 / NBRC 100440) (Methanococcus jannaschii).